Here is a 1357-residue protein sequence, read N- to C-terminus: DNA-directed RNA polymerase subunit beta (1357 aa).

Belongs to the RNA polymerase beta chain family. The RNAP catalytic core consists of 2 alpha, 1 beta, 1 beta' and 1 omega subunit. When a sigma factor is associated with the core the holoenzyme is formed, which can initiate transcription.

It catalyses the reaction RNA(n) + a ribonucleoside 5'-triphosphate = RNA(n+1) + diphosphate. DNA-dependent RNA polymerase catalyzes the transcription of DNA into RNA using the four ribonucleoside triphosphates as substrates. The sequence is that of DNA-directed RNA polymerase subunit beta from Pseudomonas syringae pv. syringae (strain B728a).